Reading from the N-terminus, the 855-residue chain is Replication factor C small subunit (855 aa).

One can recognise a DOD-type homing endonuclease domain in the interval 185–308 (WLGYFLGGGY…IAYALAGFGI (124 aa)).

Belongs to the activator 1 small subunits family. RfcS subfamily. Heteromultimer composed of small subunits (RfcS) and large subunits (RfcL). This protein undergoes a protein self splicing that involves a post-translational excision of the intervening region (intein) followed by peptide ligation.

Its function is as follows. Part of the RFC clamp loader complex which loads the PCNA sliding clamp onto DNA. The sequence is that of Replication factor C small subunit (rfcS) from Pyrococcus horikoshii (strain ATCC 700860 / DSM 12428 / JCM 9974 / NBRC 100139 / OT-3).